The chain runs to 328 residues: Small neutral protease regulatory protein (328 aa).

One can recognise an HTH lysR-type domain in the interval 1–60 (MELEVRHLRALCAIADAGSLHRAARRLGVAQPTLSTQLTRIEQALGGPLFTRERTGCRPT). Positions 20–39 (LHRAARRLGVAQPTLSTQLT) form a DNA-binding region, H-T-H motif.

Belongs to the LysR transcriptional regulatory family.

In terms of biological role, transcriptional trans-activator of the gene (mprA) for the small neutral protease. This chain is Small neutral protease regulatory protein (mprR), found in Streptomyces coelicolor (strain ATCC BAA-471 / A3(2) / M145).